We begin with the raw amino-acid sequence, 338 residues long: Aspartate carbamoyltransferase catalytic subunit (338 aa).

Carbamoyl phosphate contacts are provided by arginine 59 and threonine 60. Lysine 87 contributes to the L-aspartate binding site. 3 residues coordinate carbamoyl phosphate: arginine 109, histidine 142, and glutamine 145. The L-aspartate site is built by arginine 182 and arginine 253. 2 residues coordinate carbamoyl phosphate: glycine 294 and proline 295.

The protein belongs to the aspartate/ornithine carbamoyltransferase superfamily. ATCase family. Heterododecamer (2C3:3R2) of six catalytic PyrB chains organized as two trimers (C3), and six regulatory PyrI chains organized as three dimers (R2).

It carries out the reaction carbamoyl phosphate + L-aspartate = N-carbamoyl-L-aspartate + phosphate + H(+). It functions in the pathway pyrimidine metabolism; UMP biosynthesis via de novo pathway; (S)-dihydroorotate from bicarbonate: step 2/3. Its function is as follows. Catalyzes the condensation of carbamoyl phosphate and aspartate to form carbamoyl aspartate and inorganic phosphate, the committed step in the de novo pyrimidine nucleotide biosynthesis pathway. This Prochlorococcus marinus (strain MIT 9301) protein is Aspartate carbamoyltransferase catalytic subunit.